We begin with the raw amino-acid sequence, 113 residues long: UPF0122 protein Lreu_1156 (113 aa).

This sequence belongs to the UPF0122 family.

In terms of biological role, might take part in the signal recognition particle (SRP) pathway. This is inferred from the conservation of its genetic proximity to ftsY/ffh. May be a regulatory protein. In Limosilactobacillus reuteri (strain DSM 20016) (Lactobacillus reuteri), this protein is UPF0122 protein Lreu_1156.